The following is an 84-amino-acid chain: Large ribosomal subunit protein bL27 (84 aa).

Residues 1 to 25 (MAHKKAGGSSKNGRDSAGKRLGVKR) are disordered.

Belongs to the bacterial ribosomal protein bL27 family.

In Syntrophotalea carbinolica (strain DSM 2380 / NBRC 103641 / GraBd1) (Pelobacter carbinolicus), this protein is Large ribosomal subunit protein bL27.